We begin with the raw amino-acid sequence, 391 residues long: S-adenosylmethionine synthase 1 (391 aa).

Position 9 (Glu9) interacts with Mg(2+). His15 serves as a coordination point for ATP. Glu43 serves as a coordination point for K(+). L-methionine contacts are provided by Glu56 and Gln99. Residues 167-169 (DGK), 235-238 (SGRF), Asp246, 252-253 (RK), Ala269, Lys273, and Lys277 each bind ATP. Asp246 contacts L-methionine. L-methionine is bound at residue Lys277.

This sequence belongs to the AdoMet synthase family. In terms of assembly, homotetramer. The cofactor is Mn(2+). Mg(2+) is required as a cofactor. It depends on Co(2+) as a cofactor. Requires K(+) as cofactor.

Its subcellular location is the cytoplasm. The enzyme catalyses L-methionine + ATP + H2O = S-adenosyl-L-methionine + phosphate + diphosphate. It functions in the pathway amino-acid biosynthesis; S-adenosyl-L-methionine biosynthesis; S-adenosyl-L-methionine from L-methionine: step 1/1. Its function is as follows. Catalyzes the formation of S-adenosylmethionine from methionine and ATP. The reaction comprises two steps that are both catalyzed by the same enzyme: formation of S-adenosylmethionine (AdoMet) and triphosphate, and subsequent hydrolysis of the triphosphate. The polypeptide is S-adenosylmethionine synthase 1 (METK1) (Vitis vinifera (Grape)).